The following is a 370-amino-acid chain: Homospermidine synthase 1 (370 aa).

It belongs to the deoxyhypusine synthase family. As to quaternary structure, homotetramer. NAD(+) serves as cofactor. Post-translationally, the N-terminus is blocked. In terms of tissue distribution, expressed in roots.

It carries out the reaction putrescine + spermidine = sym-homospermidine + propane-1,3-diamine. It functions in the pathway alkaloid biosynthesis; pyrrolizidine alkaloid biosynthesis. Catalyzes the transfer of an aminobutyl unit from spermidine onto putrescine. The resulting polyamine homospermidine is a precursor in the biosynthesis of pyrrolizidine alkaloids. This is Homospermidine synthase 1 (HSS1) from Senecio vernalis (Spring groundsel).